A 616-amino-acid chain; its full sequence is Kelch-like protein 36 (616 aa).

One can recognise a BTB domain in the interval 46–113; it reads CDVVLVADEQ…LYGGELVLDG (68 aa). The BACK domain occupies 148-250; it reads YLYLQELASI…PKNDLLHRVK (103 aa). Kelch repeat units follow at residues 296–345, 346–397, 398–444, 446–493, 494–546, and 547–595; these read CLLF…VLGG, FIFI…SIED, MLVA…IYKD, VYIS…SLGD, SIYS…VWEG, and RIYI…VCAL.

Interacts with CUL3.

Its pathway is protein modification; protein ubiquitination. Its function is as follows. Probable substrate-specific adapter of an E3 ubiquitin-protein ligase complex which mediates the ubiquitination and subsequent proteasomal degradation of target proteins. The polypeptide is Kelch-like protein 36 (KLHL36) (Bos taurus (Bovine)).